A 228-amino-acid chain; its full sequence is Translation initiation factor 6 (228 aa).

It belongs to the eIF-6 family.

Functionally, binds to the 50S ribosomal subunit and prevents its association with the 30S ribosomal subunit to form the 70S initiation complex. This Thermococcus gammatolerans (strain DSM 15229 / JCM 11827 / EJ3) protein is Translation initiation factor 6.